The chain runs to 333 residues: Tetraacyldisaccharide 4'-kinase (333 aa).

55-62 contributes to the ATP binding site; it reads TAGGNGKT.

It belongs to the LpxK family.

The catalysed reaction is a lipid A disaccharide + ATP = a lipid IVA + ADP + H(+). The protein operates within glycolipid biosynthesis; lipid IV(A) biosynthesis; lipid IV(A) from (3R)-3-hydroxytetradecanoyl-[acyl-carrier-protein] and UDP-N-acetyl-alpha-D-glucosamine: step 6/6. Transfers the gamma-phosphate of ATP to the 4'-position of a tetraacyldisaccharide 1-phosphate intermediate (termed DS-1-P) to form tetraacyldisaccharide 1,4'-bis-phosphate (lipid IVA). This Pectobacterium carotovorum subsp. carotovorum (strain PC1) protein is Tetraacyldisaccharide 4'-kinase.